The chain runs to 330 residues: Adenylate isopentenyltransferase 8, chloroplastic (330 aa).

A chloroplast-targeting transit peptide spans 1–35 (MQNLTSTFVSPSMIPITSPRLRLPPPRSVVPMTTV). Position 50-57 (50-57 (GATGSGKS)) interacts with ATP.

This sequence belongs to the IPP transferase family. Expressed in roots and in immature seeds with highest expression in the chalazal endosperm.

The protein resides in the plastid. It is found in the chloroplast. It carries out the reaction dimethylallyl diphosphate + ADP = N(6)-(dimethylallyl)adenosine 5'-diphosphate + diphosphate. The catalysed reaction is dimethylallyl diphosphate + ATP = N(6)-(dimethylallyl)adenosine 5'-triphosphate + diphosphate. Functionally, involved in cytokinin biosynthesis. Catalyzes the transfer of an isopentenyl group from dimethylallyl diphosphate (DMAPP) to ATP and ADP. The chain is Adenylate isopentenyltransferase 8, chloroplastic (IPT8) from Arabidopsis thaliana (Mouse-ear cress).